The primary structure comprises 184 residues: NADH-quinone oxidoreductase subunit B (184 aa).

C37, C38, C103, and C132 together coordinate [4Fe-4S] cluster.

It belongs to the complex I 20 kDa subunit family. In terms of assembly, NDH-1 is composed of 14 different subunits. Subunits NuoB, C, D, E, F, and G constitute the peripheral sector of the complex. It depends on [4Fe-4S] cluster as a cofactor.

Its subcellular location is the cell membrane. It catalyses the reaction a quinone + NADH + 5 H(+)(in) = a quinol + NAD(+) + 4 H(+)(out). In terms of biological role, NDH-1 shuttles electrons from NADH, via FMN and iron-sulfur (Fe-S) centers, to quinones in the respiratory chain. The immediate electron acceptor for the enzyme in this species is believed to be a menaquinone. Couples the redox reaction to proton translocation (for every two electrons transferred, four hydrogen ions are translocated across the cytoplasmic membrane), and thus conserves the redox energy in a proton gradient. The chain is NADH-quinone oxidoreductase subunit B from Mycobacterium bovis (strain BCG / Pasteur 1173P2).